The following is a 285-amino-acid chain: Nucleotide-binding protein Geob_2284 (285 aa).

8–15 (GLSGSGKS) contributes to the ATP binding site. Position 59-62 (59-62 (DIRG)) interacts with GTP.

It belongs to the RapZ-like family.

Its function is as follows. Displays ATPase and GTPase activities. This is Nucleotide-binding protein Geob_2284 from Geotalea daltonii (strain DSM 22248 / JCM 15807 / FRC-32) (Geobacter daltonii).